Consider the following 419-residue polypeptide: CCA-adding enzyme (419 aa).

Residues Gly8 and Arg11 each coordinate ATP. CTP-binding residues include Gly8 and Arg11. 2 residues coordinate Mg(2+): Asp21 and Asp23. Residues Arg91, Arg137, and Arg140 each coordinate ATP. CTP-binding residues include Arg91, Arg137, and Arg140.

It belongs to the tRNA nucleotidyltransferase/poly(A) polymerase family. Bacterial CCA-adding enzyme type 2 subfamily. The cofactor is Mg(2+).

The catalysed reaction is a tRNA precursor + 2 CTP + ATP = a tRNA with a 3' CCA end + 3 diphosphate. It catalyses the reaction a tRNA with a 3' CCA end + 2 CTP + ATP = a tRNA with a 3' CCACCA end + 3 diphosphate. Its function is as follows. Catalyzes the addition and repair of the essential 3'-terminal CCA sequence in tRNAs without using a nucleic acid template. Adds these three nucleotides in the order of C, C, and A to the tRNA nucleotide-73, using CTP and ATP as substrates and producing inorganic pyrophosphate. tRNA 3'-terminal CCA addition is required both for tRNA processing and repair. Also involved in tRNA surveillance by mediating tandem CCA addition to generate a CCACCA at the 3' terminus of unstable tRNAs. While stable tRNAs receive only 3'-terminal CCA, unstable tRNAs are marked with CCACCA and rapidly degraded. The protein is CCA-adding enzyme of Buchnera aphidicola subsp. Baizongia pistaciae (strain Bp).